Reading from the N-terminus, the 141-residue chain is 3-hydroxyacyl-[acyl-carrier-protein] dehydratase FabZ (141 aa).

Histidine 49 is an active-site residue.

It belongs to the thioester dehydratase family. FabZ subfamily.

The protein localises to the cytoplasm. It carries out the reaction a (3R)-hydroxyacyl-[ACP] = a (2E)-enoyl-[ACP] + H2O. Involved in unsaturated fatty acids biosynthesis. Catalyzes the dehydration of short chain beta-hydroxyacyl-ACPs and long chain saturated and unsaturated beta-hydroxyacyl-ACPs. This is 3-hydroxyacyl-[acyl-carrier-protein] dehydratase FabZ from Clostridium acetobutylicum (strain ATCC 824 / DSM 792 / JCM 1419 / IAM 19013 / LMG 5710 / NBRC 13948 / NRRL B-527 / VKM B-1787 / 2291 / W).